Reading from the N-terminus, the 231-residue chain is Ribose-5-phosphate isomerase A (231 aa).

Substrate-binding positions include 32–35 (TGST), 85–88 (DGAD), and 98–101 (KGGG). Residue E107 is the Proton acceptor of the active site. K125 is a substrate binding site.

This sequence belongs to the ribose 5-phosphate isomerase family. Homodimer.

The enzyme catalyses aldehydo-D-ribose 5-phosphate = D-ribulose 5-phosphate. The protein operates within carbohydrate degradation; pentose phosphate pathway; D-ribose 5-phosphate from D-ribulose 5-phosphate (non-oxidative stage): step 1/1. Functionally, catalyzes the reversible conversion of ribose-5-phosphate to ribulose 5-phosphate. In Paraburkholderia xenovorans (strain LB400), this protein is Ribose-5-phosphate isomerase A.